A 261-amino-acid chain; its full sequence is Cytochrome c oxidase subunit 3 (261 aa).

The Mitochondrial matrix segment spans residues 1 to 15; it reads MTHQTHAYHMVNPSP. A helical membrane pass occupies residues 16 to 34; sequence WPLTGALSALLMTSGLIMW. Residues 35 to 40 lie on the Mitochondrial intermembrane side of the membrane; that stretch reads FHFNST. The chain crosses the membrane as a helical span at residues 41–66; the sequence is ILLMLGLTTNMLTMYQWWRDVIREST. Over 67–72 the chain is Mitochondrial matrix; it reads FQGHHT. Residues 73–105 form a helical membrane-spanning segment; it reads PNVQKGLRYGMILFIISEVLFFTGFFWAFYHSS. Over 106 to 128 the chain is Mitochondrial intermembrane; that stretch reads LAPTPELGGCWPPTGIHPLNPLE. Residues 129 to 152 form a helical membrane-spanning segment; it reads VPLLNTSVLLASGVSITWAHHSLM. Residues 153–155 are Mitochondrial matrix-facing; that stretch reads EGN. A helical transmembrane segment spans residues 156-183; sequence RNHMLQALFITIALGVYFTLLQASEYYE. At 184–190 the chain is on the mitochondrial intermembrane side; that stretch reads APFTISD. Residues 191 to 223 traverse the membrane as a helical segment; it reads GVYGSTFFVATGFHGLHVIIGSTFLIVCFFRQL. Topologically, residues 224 to 232 are mitochondrial matrix; sequence KFHFTSNHH. The helical transmembrane segment at 233-256 threads the bilayer; sequence FGFEAAAWYWHFVDVVWLFLYVSI. At 257–261 the chain is on the mitochondrial intermembrane side; that stretch reads YWWGS.

It belongs to the cytochrome c oxidase subunit 3 family. Component of the cytochrome c oxidase (complex IV, CIV), a multisubunit enzyme composed of 14 subunits. The complex is composed of a catalytic core of 3 subunits MT-CO1, MT-CO2 and MT-CO3, encoded in the mitochondrial DNA, and 11 supernumerary subunits COX4I, COX5A, COX5B, COX6A, COX6B, COX6C, COX7A, COX7B, COX7C, COX8 and NDUFA4, which are encoded in the nuclear genome. The complex exists as a monomer or a dimer and forms supercomplexes (SCs) in the inner mitochondrial membrane with NADH-ubiquinone oxidoreductase (complex I, CI) and ubiquinol-cytochrome c oxidoreductase (cytochrome b-c1 complex, complex III, CIII), resulting in different assemblies (supercomplex SCI(1)III(2)IV(1) and megacomplex MCI(2)III(2)IV(2)).

The protein resides in the mitochondrion inner membrane. The enzyme catalyses 4 Fe(II)-[cytochrome c] + O2 + 8 H(+)(in) = 4 Fe(III)-[cytochrome c] + 2 H2O + 4 H(+)(out). Its function is as follows. Component of the cytochrome c oxidase, the last enzyme in the mitochondrial electron transport chain which drives oxidative phosphorylation. The respiratory chain contains 3 multisubunit complexes succinate dehydrogenase (complex II, CII), ubiquinol-cytochrome c oxidoreductase (cytochrome b-c1 complex, complex III, CIII) and cytochrome c oxidase (complex IV, CIV), that cooperate to transfer electrons derived from NADH and succinate to molecular oxygen, creating an electrochemical gradient over the inner membrane that drives transmembrane transport and the ATP synthase. Cytochrome c oxidase is the component of the respiratory chain that catalyzes the reduction of oxygen to water. Electrons originating from reduced cytochrome c in the intermembrane space (IMS) are transferred via the dinuclear copper A center (CU(A)) of subunit 2 and heme A of subunit 1 to the active site in subunit 1, a binuclear center (BNC) formed by heme A3 and copper B (CU(B)). The BNC reduces molecular oxygen to 2 water molecules using 4 electrons from cytochrome c in the IMS and 4 protons from the mitochondrial matrix. This chain is Cytochrome c oxidase subunit 3 (MT-CO3), found in Eudorcas thomsonii (Thomson's gazelle).